The chain runs to 251 residues: Ribosomal RNA small subunit methyltransferase G (251 aa).

S-adenosyl-L-methionine-binding positions include G74, F79, 125 to 126 (AE), and R144. The interval 224–251 (RPAGLPTQHPLGAIEGAPRVESEEPEEP) is disordered.

Belongs to the methyltransferase superfamily. RNA methyltransferase RsmG family.

The protein localises to the cytoplasm. Specifically methylates the N7 position of a guanine in 16S rRNA. This chain is Ribosomal RNA small subunit methyltransferase G, found in Gloeobacter violaceus (strain ATCC 29082 / PCC 7421).